Here is a 108-residue protein sequence, read N- to C-terminus: uncharacterized protein (108 aa).

Residues 25-45 form a helical membrane-spanning segment; the sequence is VILKSFLLISSWVILVLLLVI.

Its subcellular location is the membrane. This is an uncharacterized protein from Saccharomyces cerevisiae (strain ATCC 204508 / S288c) (Baker's yeast).